Consider the following 367-residue polypeptide: Histidinol-phosphate aminotransferase (367 aa).

Lys226 carries the post-translational modification N6-(pyridoxal phosphate)lysine.

The protein belongs to the class-II pyridoxal-phosphate-dependent aminotransferase family. Histidinol-phosphate aminotransferase subfamily. Homodimer. The cofactor is pyridoxal 5'-phosphate.

The catalysed reaction is L-histidinol phosphate + 2-oxoglutarate = 3-(imidazol-4-yl)-2-oxopropyl phosphate + L-glutamate. The protein operates within amino-acid biosynthesis; L-histidine biosynthesis; L-histidine from 5-phospho-alpha-D-ribose 1-diphosphate: step 7/9. The protein is Histidinol-phosphate aminotransferase of Aliarcobacter butzleri (strain RM4018) (Arcobacter butzleri).